The following is a 405-amino-acid chain: Putative arsenical pump-driving ATPase (405 aa).

8–15 (GKGGVGKT) is a binding site for ATP.

Belongs to the arsA ATPase family.

It catalyses the reaction arsenite(in) + ATP + H2O = arsenite(out) + ADP + phosphate + H(+). Its function is as follows. Anion-transporting ATPase. Catalyzes the extrusion of arsenite. This Prosthecochloris vibrioformis (Chlorobium vibrioforme) protein is Putative arsenical pump-driving ATPase.